Consider the following 364-residue polypeptide: MSSAPRSPTPRPRRMKKDESFLGKLGGTLARKRRAREVSDLQEEGKNAINSPMSPALVDVHPEDTQLEENEERTMIDPTSKEDPKFKELVKVLLDWINDVLVEERIIVKQLEEDLYDGQVLQKLLEKLAGCKLNVAEVTQSEIGQKQKLQTVLEAVHDLLRPRGWALRWSVDSIHGKNLVAILHLLVSLAMHFRAPIRLPEHVTVQVVVVRKREGLLHSSHISEELTTTTEMMMGRFERDAFDTLFDHAPDKLSVVKKSLITFVNKHLNKLNLEVTELETQFADGVYLVLLMGLLEDYFVPLHHFYLTPESFDQKVHNVSFAFELMLDGGLKKPKARPEDVVNLDLKSTLRVLYNLFTKYKNVE.

The segment at 1–57 (MSSAPRSPTPRPRRMKKDESFLGKLGGTLARKRRAREVSDLQEEGKNAINSPMSPAL) is disordered. The residue at position 7 (Ser7) is a Phosphoserine. The span at 36 to 46 (REVSDLQEEGK) shows a compositional bias: basic and acidic residues. Ser54 is subject to Phosphoserine. Calponin-homology (CH) domains follow at residues 87-194 (KELV…MHFR) and 254-361 (SVVK…TKYK).

It belongs to the parvin family. Interacts with DYSF. Interacts with ILK, ARHGEF6, PXN (via LD motifs), ACTN2 and actin. Expressed predominantly in heart and skeletal muscle.

Its subcellular location is the cell junction. It is found in the focal adhesion. The protein localises to the cell membrane. The protein resides in the cytoplasm. It localises to the cytoskeleton. Its subcellular location is the cell projection. It is found in the lamellipodium. The protein localises to the myofibril. The protein resides in the sarcomere. It localises to the z line. Its function is as follows. Adapter protein that plays a role in integrin signaling via ILK and in activation of the GTPases CDC42 and RAC1 by guanine exchange factors, such as ARHGEF6. Is involved in the reorganization of the actin cytoskeleton and formation of lamellipodia. Plays a role in cell adhesion, cell spreading, establishment or maintenance of cell polarity, and cell migration. The sequence is that of Beta-parvin (PARVB) from Homo sapiens (Human).